The chain runs to 574 residues: Bifunctional NAD(P)H-hydrate repair enzyme Nnr (574 aa).

Residues 1 to 269 (MKPVFSVDQI…SLFERANLKA (269 aa)) are NAD(P)H-hydrate epimerase. A YjeF N-terminal domain is found at 10–231 (IRRAENTLFE…DINIAGGGGK (222 aa)). An NADPHX 1; for epimerase activity region spans residues 64-68 (GNGGD). K(+)-binding residues include asparagine 65 and aspartate 123. The interval 127–133 (GIGGRGG) is NADPHX 1; for epimerase activity. Aspartate 156 contributes to the (6S)-NADPHX binding site. Serine 159 provides a ligand contact to K(+). The region spanning 277–568 (IGQHFTVLNM…DAIPAATAKV (292 aa)) is the YjeF C-terminal domain. Residues 277-574 (IGQHFTVLNM…TAKVDLKRIV (298 aa)) are ADP-dependent (S)-NAD(P)H-hydrate dehydratase. Glycine 365 contributes to the (6S)-NADPHX binding site. Residues 418–424 (HKGEFER) are NADPHX 2; for dehydratase activity. Residues 461-465 (KGKYT) and 480-489 (HSWLATPGSG) each bind ADP. Aspartate 490 lines the (6S)-NADPHX pocket.

It in the N-terminal section; belongs to the NnrE/AIBP family. In the C-terminal section; belongs to the NnrD/CARKD family. K(+) serves as cofactor.

It carries out the reaction (6S)-NADHX + ADP = AMP + phosphate + NADH + H(+). The catalysed reaction is (6S)-NADPHX + ADP = AMP + phosphate + NADPH + H(+). The enzyme catalyses (6R)-NADHX = (6S)-NADHX. It catalyses the reaction (6R)-NADPHX = (6S)-NADPHX. Its function is as follows. Bifunctional enzyme that catalyzes the epimerization of the S- and R-forms of NAD(P)HX and the dehydration of the S-form of NAD(P)HX at the expense of ADP, which is converted to AMP. This allows the repair of both epimers of NAD(P)HX, a damaged form of NAD(P)H that is a result of enzymatic or heat-dependent hydration. This Corynebacterium glutamicum (strain ATCC 13032 / DSM 20300 / JCM 1318 / BCRC 11384 / CCUG 27702 / LMG 3730 / NBRC 12168 / NCIMB 10025 / NRRL B-2784 / 534) protein is Bifunctional NAD(P)H-hydrate repair enzyme Nnr (nnr).